A 475-amino-acid chain; its full sequence is Probable 5'-adenylylsulfate reductase 1, chloroplastic (475 aa).

A chloroplast-targeting transit peptide spans M1 to S63. The tract at residues A72–G327 is reductase domain. A Thioredoxin domain is found at H341 to R475. Catalysis depends on nucleophile residues C393 and C396. An intrachain disulfide couples C393 to C396.

This sequence belongs to the APS reductase family. It depends on [4Fe-4S] cluster as a cofactor.

The protein resides in the plastid. The protein localises to the chloroplast. It carries out the reaction glutathione disulfide + sulfite + AMP + 2 H(+) = adenosine 5'-phosphosulfate + 2 glutathione. Reduces sulfate for Cys biosynthesis. In Oryza sativa subsp. japonica (Rice), this protein is Probable 5'-adenylylsulfate reductase 1, chloroplastic (APR1).